The sequence spans 91 residues: Non-specific lipid-transfer protein P5 (91 aa).

4 disulfides stabilise this stretch: Cys-3–Cys-50, Cys-13–Cys-27, Cys-28–Cys-73, and Cys-48–Cys-87.

It is found in the secreted. In terms of biological role, plant non-specific lipid-transfer proteins transfer phospholipids as well as galactolipids across membranes. May play a role in wax or cutin deposition in the cell walls of expanding epidermal cells and certain secretory tissues. This is Non-specific lipid-transfer protein P5 from Vitis sp. (Grape).